The primary structure comprises 552 residues: Hyaluronan synthase 2 (552 aa).

Topologically, residues 1 to 11 are cytoplasmic; sequence MHCERFLCVLR. Residues 12–32 form a helical membrane-spanning segment; it reads IIGTTLFGVSLLLGITAAYIV. At 33–45 the chain is on the extracellular side; sequence GYQFIQTDNYYFS. A helical membrane pass occupies residues 46-66; it reads FGLYGAFLASHLIIQSLFAFL. At 67 to 374 the chain is on the cytoplasmic side; sequence EHRKMKKSLE…NAMWFHKHHL (308 aa). A Phosphothreonine modification is found at threonine 110. Lysine 190 is covalently cross-linked (Glycyl lysine isopeptide (Lys-Gly) (interchain with G-Cter in ubiquitin)). Serine 221 carries O-linked (GlcNAc) serine glycosylation. Residue threonine 328 is modified to Phosphothreonine. Residues 375 to 395 traverse the membrane as a helical segment; that stretch reads WMTYEAVITGFFPFFLIATVI. Over 396–402 the chain is Extracellular; that stretch reads QLFYRGK. Residues 403–423 traverse the membrane as a helical segment; the sequence is IWNILLFLLTVQLVGLIKSSF. Residues 424–429 are Cytoplasmic-facing; it reads ASCLRG. The chain crosses the membrane as a helical span at residues 430–450; that stretch reads NIVMVFMSLYSVLYMSSLLPA. Residues 451–475 lie on the Extracellular side of the membrane; it reads KMFAIATINKAGWGTSGRKTIVVNF. The chain crosses the membrane as a helical span at residues 476-496; it reads IGLIPVSVWFTILLGGVIFTI. The Cytoplasmic portion of the chain corresponds to 497–510; that stretch reads YKESKKPFSESKQT. Residues 511-531 traverse the membrane as a helical segment; sequence VLIVGTLIYACYWVMLLTLYV. At 532-552 the chain is on the extracellular side; that stretch reads VLINKCGRRKKGQQYDMVLDV.

Belongs to the NodC/HAS family. As to quaternary structure, homodimer; dimerization promotes enzymatic activity. Forms heterodimer with HAS3. Forms heterodimer with HAS1. Mg(2+) is required as a cofactor. Post-translationally, phosphorylation at Thr-328 is essential for hyaluronan synthase activity. O-GlcNAcylation at Ser-221 increases the stability of HAS2 and plasma membrane localization. In terms of processing, ubiquitination at Lys-190; this ubiquitination is essential for hyaluronan synthase activity and homo- or hetero-oligomerization. Can also be poly-ubiquitinated. Deubiquitinated by USP17L22/USP17 and USP4. USP17L22/USP17 efficiently removes 'Lys-63'- and 'Lys-48'-linked polyubiquitin chains, whereas USP4 preferentially removes monoubiquitination and, partially, both 'Lys-63'- and 'Lys-48'-linked polyubiquitin chain. In terms of tissue distribution, expressed in heart, brain, spleen, lung and skeletal muscle.

It localises to the cell membrane. Its subcellular location is the endoplasmic reticulum membrane. The protein resides in the vesicle. It is found in the golgi apparatus membrane. The protein localises to the lysosome. The catalysed reaction is [hyaluronan](n) + UDP-N-acetyl-alpha-D-glucosamine = N-acetyl-beta-D-glucosaminyl-(1-&gt;4)-[hyaluronan](n) + UDP + H(+). It carries out the reaction N-acetyl-beta-D-glucosaminyl-(1-&gt;4)-[hyaluronan](n) + UDP-alpha-D-glucuronate = [hyaluronan](n+1) + UDP + H(+). The protein operates within glycan biosynthesis; hyaluronan biosynthesis. In terms of biological role, catalyzes the addition of GlcNAc or GlcUA monosaccharides to the nascent hyaluronan polymer. Therefore, it is essential to hyaluronan synthesis a major component of most extracellular matrices that has a structural role in tissues architectures and regulates cell adhesion, migration and differentiation. This is one of the isozymes catalyzing that reaction and it is particularly responsible for the synthesis of high molecular mass hyaluronan. Required for the transition of endocardial cushion cells into mesenchymal cells, a process crucial for heart development. May also play a role in vasculogenesis. High molecular mass hyaluronan also play a role in early contact inhibition a process which stops cell growth when cells come into contact with each other or the extracellular matrix. Functionally, catalyzes the addition of GlcNAc or GlcUA monosaccharides to the nascent hyaluronan polymer. Therefore, it is essential to hyaluronan synthesis a major component of most extracellular matrices that has a structural role in tissues architectures and regulates cell adhesion, migration and differentiation. This is one of three isoenzymes responsible for cellular hyaluronan synthesis and it is particularly responsible for the synthesis of high molecular mass hyaluronan. The sequence is that of Hyaluronan synthase 2 from Mus musculus (Mouse).